Consider the following 111-residue polypeptide: RNA polymerase-binding protein RbpA (111 aa).

This sequence belongs to the RNA polymerase-binding protein RbpA family. In terms of assembly, forms a complex with the RNAP catalytic core and with free principal sigma factors.

Binds to RNA polymerase (RNAP), stimulating transcription from principal, but not alternative sigma factor promoters. This chain is RNA polymerase-binding protein RbpA, found in Mycobacterium tuberculosis (strain CDC 1551 / Oshkosh).